The following is a 320-amino-acid chain: Ferrochelatase (320 aa).

Fe cation-binding residues include His194 and Glu275.

The protein belongs to the ferrochelatase family. As to quaternary structure, monomer.

Its subcellular location is the cytoplasm. It catalyses the reaction heme b + 2 H(+) = protoporphyrin IX + Fe(2+). It participates in porphyrin-containing compound metabolism; protoheme biosynthesis; protoheme from protoporphyrin-IX: step 1/1. In terms of biological role, catalyzes the ferrous insertion into protoporphyrin IX. The protein is Ferrochelatase of Salmonella agona (strain SL483).